Here is a 177-residue protein sequence, read N- to C-terminus: MSRIGKKPVPVPAGVTANVDGQKVTAKGPKGELFFVANDDIQLKLEDNGVSVTPANGTKEARSKWGMSRTMIENIFKGVKDGYERKLEINGVGYRAALQGKNLQLALGFSHDVVYEPPVGITIAVPKPTEIIVSGINKQQVGQVAAEIREYRGPEPYKGKGVKYAEERIVRKEGKKK.

Belongs to the universal ribosomal protein uL6 family. As to quaternary structure, part of the 50S ribosomal subunit.

Its function is as follows. This protein binds to the 23S rRNA, and is important in its secondary structure. It is located near the subunit interface in the base of the L7/L12 stalk, and near the tRNA binding site of the peptidyltransferase center. In Agrobacterium fabrum (strain C58 / ATCC 33970) (Agrobacterium tumefaciens (strain C58)), this protein is Large ribosomal subunit protein uL6.